The following is a 1478-amino-acid chain: Serine/threonine-protein kinase BCK1/SLK1/SSP31 (1478 aa).

4 disordered regions span residues 1 to 70 (MPFL…TSSQ), 99 to 126 (TSFTNSSYKNDNGPSSLSDSRKSSGGNS), 217 to 359 (NVTN…RRHH), and 373 to 427 (FGSG…KGNL). Residues 29 to 49 (PTSSVASTKSSSKSPRATSRK) are compositionally biased toward low complexity. Polar residues-rich tracts occupy residues 58 to 70 (QFPNLTPNSTSSQ) and 99 to 110 (TSFTNSSYKNDN). Residues 111–126 (GPSSLSDSRKSSGGNS) are compositionally biased toward low complexity. A compositionally biased stretch (basic residues) spans 223–233 (IRQKSASKLKS). Polar residues-rich tracts occupy residues 253 to 273 (DISNSRSTSESALSPTKSGPS) and 281 to 297 (LHSTSTHQKTKSASSLY). Low complexity-rich tracts occupy residues 298–320 (RRSFISLRGSSSSNASSAKSPSN) and 342–353 (SASPPASPSYPS). Composition is skewed to polar residues over residues 386-396 (NPQGHSLSSEN) and 407-420 (TNVSSPLKQSSLPT). A Phosphothreonine modification is found at Thr-407. Residues Ser-411 and Ser-491 each carry the phosphoserine modification. Residues 644–671 (KPKPAPLTSENNVPLKSVKSKSSMRSGT) form a disordered region. Low complexity predominate over residues 659–671 (KSVKSKSSMRSGT). The residue at position 747 (Ser-747) is a Phosphoserine. Disordered stretches follow at residues 752-877 (LNLP…ASTH), 895-939 (KTDQ…RGNS), 960-1021 (ADAP…TQDK), and 1053-1116 (TEGI…TPKR). Residues 765–777 (TPITENESKSSFQ) are compositionally biased toward polar residues. Over residues 779 to 809 (LRKDEGTEIDFNHRRESPYTKPELAPKREAP) the composition is skewed to basic and acidic residues. Over residues 813 to 827 (ANTSPQRTLSTSKQN) the composition is skewed to polar residues. Position 816 is a phosphoserine (Ser-816). 2 stretches are compositionally biased toward low complexity: residues 851–870 (QLLSSPIEASSSSPDSLTSS) and 914–925 (NRSNSTVSTSNS). Acidic residues predominate over residues 967 to 977 (DSDDSDDDSSS). The segment covering 994-1011 (NENKKDEKSDNSSTHSDE) has biased composition (basic and acidic residues). Residues Ser-1058 and Ser-1061 each carry the phosphoserine modification. Over residues 1058–1083 (SPTSPKSLDSLLSPKNVASSRTEPST) the composition is skewed to low complexity. A Phosphoserine; by PKC modification is found at Ser-1134. A Protein kinase domain is found at 1175-1440 (WMKGEMIGKG…ANELLSHPFS (266 aa)). ATP is bound by residues 1181–1189 (IGKGSFGAV) and Lys-1204. The active-site Proton acceptor is Asp-1303.

This sequence belongs to the protein kinase superfamily. STE Ser/Thr protein kinase family. MAP kinase kinase kinase subfamily.

It is found in the cytoplasm. It catalyses the reaction L-seryl-[protein] + ATP = O-phospho-L-seryl-[protein] + ADP + H(+). The catalysed reaction is L-threonyl-[protein] + ATP = O-phospho-L-threonyl-[protein] + ADP + H(+). Serine/threonine protein kinase involved in a signal transduction pathway that plays a role in yeast cell morphogenesis and cell growth. This pathway seems to start by SMP3; then involve the kinase PKC1 that may act on this kinase. BCK1 probably phosphorylates MKK1 and MKK2 which themselves phosphorylate the MPK1 kinase. This Saccharomyces cerevisiae (strain ATCC 204508 / S288c) (Baker's yeast) protein is Serine/threonine-protein kinase BCK1/SLK1/SSP31 (BCK1).